The chain runs to 339 residues: Terpene synthase 9 (339 aa).

Positions 79–84 match the DDxx(x)D/E motif motif; the sequence is DDFLES. The short motif at 219–227 is the NDxxSxxxD/E motif element; it reads NDCASYAKE.

It belongs to the terpene synthase family.

The enzyme catalyses (2E,6E)-farnesyl diphosphate = (-)-beta-barbatene + diphosphate. It catalyses the reaction (2E,6E)-farnesyl diphosphate = (E)-beta-farnesene + diphosphate. It carries out the reaction (2E)-geranyl diphosphate = (Z)-beta-ocimene + diphosphate. The catalysed reaction is (2E)-geranyl diphosphate + H2O = linalool + diphosphate. The enzyme catalyses (2E)-geranyl diphosphate = beta-myrcene + diphosphate. Terpene synthase that converts its substrate farnesyl diphosphate (FPP) into the sesquiterpene beta-barbatene as a major product as well as (E)-beta-farnesene as a minor product. Is also able to convert geranyl diphosphate (GPP) into a mixture of monoterpenes including (Z)-beta-ocimene, linalool, beta-myrcene, limonene and alpha-terpineol. The sequence is that of Terpene synthase 9 from Dictyostelium discoideum (Social amoeba).